The chain runs to 152 residues: Lipoprotein signal peptidase (152 aa).

Helical transmembrane passes span 55–75 and 85–105; these read NKMW…VFYM and LGIS…DRVF. Active-site residues include Asp-111 and Asp-129. A helical transmembrane segment spans residues 124 to 144; sequence VFNIADSALCIGVVLIIIQTL.

The protein belongs to the peptidase A8 family.

Its subcellular location is the cell membrane. The enzyme catalyses Release of signal peptides from bacterial membrane prolipoproteins. Hydrolyzes -Xaa-Yaa-Zaa-|-(S,diacylglyceryl)Cys-, in which Xaa is hydrophobic (preferably Leu), and Yaa (Ala or Ser) and Zaa (Gly or Ala) have small, neutral side chains.. It functions in the pathway protein modification; lipoprotein biosynthesis (signal peptide cleavage). Its function is as follows. This protein specifically catalyzes the removal of signal peptides from prolipoproteins. This Bacillus cereus (strain G9842) protein is Lipoprotein signal peptidase.